Consider the following 139-residue polypeptide: SPbeta prophage-derived uncharacterized protein YomN (139 aa).

The chain is SPbeta prophage-derived uncharacterized protein YomN (yomN) from Bacillus subtilis (strain 168).